A 98-amino-acid chain; its full sequence is NADH-ubiquinone oxidoreductase chain 4L (98 aa).

3 consecutive transmembrane segments (helical) span residues Met1–Met21, Ser29–Leu49, and Ile61–Val81.

This sequence belongs to the complex I subunit 4L family. Core subunit of respiratory chain NADH dehydrogenase (Complex I) which is composed of 45 different subunits.

The protein resides in the mitochondrion inner membrane. It catalyses the reaction a ubiquinone + NADH + 5 H(+)(in) = a ubiquinol + NAD(+) + 4 H(+)(out). Its function is as follows. Core subunit of the mitochondrial membrane respiratory chain NADH dehydrogenase (Complex I) which catalyzes electron transfer from NADH through the respiratory chain, using ubiquinone as an electron acceptor. Part of the enzyme membrane arm which is embedded in the lipid bilayer and involved in proton translocation. The sequence is that of NADH-ubiquinone oxidoreductase chain 4L (MT-ND4L) from Uroderma bilobatum (Tent-making bat).